A 233-amino-acid chain; its full sequence is MHIMEGYLPPMWCAVWWVLSGIVIAYGIVKLKKLLEESPEMKPLVAISGAYMFILSSLKMPSVTGSCSHPCGNGLGAVLFGVPITAVLAAIVLLFQALFLAHGGLTTLGANDFSMGIVGPAAAVIVYRLCMKAGLSSTVGIFFAALFGDWLTYVTTAVQLALAFPIPSFTAAFTKFIVIYAYTQVPLAIAEGILTVIIWDYIKKLRPDLLLKLGVVPEEELKPYLTPSPAGGE.

Transmembrane regions (helical) follow at residues 9 to 29 (PPMWCAVWWVLSGIVIAYGIV), 43 to 63 (PLVAISGAYMFILSSLKMPSV), 75 to 95 (LGAVLFGVPITAVLAAIVLLF), 107 to 127 (TLGANDFSMGIVGPAAAVIVY), 138 to 158 (TVGIFFAALFGDWLTYVTTAV), and 177 to 197 (IVIYAYTQVPLAIAEGILTVI).

Belongs to the CbiM family. In terms of assembly, forms an energy-coupling factor (ECF) transporter complex composed of an ATP-binding protein (A component, CbiO), a transmembrane protein (T component, CbiQ) and 2 possible substrate-capture proteins (S components, CbiM and CbiN) of unknown stoichimetry.

The protein resides in the cell membrane. Its pathway is cofactor biosynthesis; adenosylcobalamin biosynthesis. Part of the energy-coupling factor (ECF) transporter complex CbiMNOQ involved in cobalt import. This Methanocaldococcus jannaschii (strain ATCC 43067 / DSM 2661 / JAL-1 / JCM 10045 / NBRC 100440) (Methanococcus jannaschii) protein is Putative cobalt transport protein CbiM.